A 497-amino-acid polypeptide reads, in one-letter code: Glycerol kinase (497 aa).

Residue T12 coordinates ADP. 3 residues coordinate ATP: T12, T13, and S14. T12 is a sn-glycerol 3-phosphate binding site. Residue R16 participates in ADP binding. Sn-glycerol 3-phosphate-binding residues include R82, E83, Y132, and D239. 5 residues coordinate glycerol: R82, E83, Y132, D239, and Q240. ADP is bound by residues T261 and G303. 4 residues coordinate ATP: T261, G303, Q307, and G402. Residues G402 and N406 each coordinate ADP.

It belongs to the FGGY kinase family. In terms of assembly, homodimer.

The catalysed reaction is glycerol + ATP = sn-glycerol 3-phosphate + ADP + H(+). It functions in the pathway polyol metabolism; glycerol degradation via glycerol kinase pathway; sn-glycerol 3-phosphate from glycerol: step 1/1. Its function is as follows. Key enzyme in the regulation of glycerol uptake and metabolism. Catalyzes the phosphorylation of glycerol to yield sn-glycerol 3-phosphate. Can utilize other nucleoside triphosphates (GTP, CTP, UTP and ITP) as a phosphoryl donor. The protein is Glycerol kinase of Thermococcus kodakarensis (strain ATCC BAA-918 / JCM 12380 / KOD1) (Pyrococcus kodakaraensis (strain KOD1)).